The primary structure comprises 218 residues: tRNA (guanine-N(7)-)-methyltransferase (218 aa).

S-adenosyl-L-methionine-binding residues include Glu-43, Asp-68, Glu-101, and Asn-124. Substrate-binding residues include Lys-128 and Asp-160.

Belongs to the class I-like SAM-binding methyltransferase superfamily. TrmB family.

The catalysed reaction is guanosine(46) in tRNA + S-adenosyl-L-methionine = N(7)-methylguanosine(46) in tRNA + S-adenosyl-L-homocysteine. The protein operates within tRNA modification; N(7)-methylguanine-tRNA biosynthesis. In terms of biological role, catalyzes the formation of N(7)-methylguanine at position 46 (m7G46) in tRNA. The polypeptide is tRNA (guanine-N(7)-)-methyltransferase (Acetivibrio thermocellus (strain ATCC 27405 / DSM 1237 / JCM 9322 / NBRC 103400 / NCIMB 10682 / NRRL B-4536 / VPI 7372) (Clostridium thermocellum)).